The primary structure comprises 158 residues: Eukaryotic translation initiation factor 5A (158 aa).

Hypusine is present on lysine 51.

Belongs to the eIF-5A family. Post-translationally, lys-51 undergoes hypusination, a unique post-translational modification that consists in the addition of a butylamino group from spermidine to lysine side chain, leading to the formation of the unusual amino acid hypusine. eIF-5As are the only known proteins to undergo this modification, which is essential for their function.

Its subcellular location is the cytoplasm. Functionally, translation factor that promotes translation elongation and termination, particularly upon ribosome stalling at specific amino acid sequence contexts. Binds between the exit (E) and peptidyl (P) site of the ribosome and promotes rescue of stalled ribosome: specifically required for efficient translation of polyproline-containing peptides as well as other motifs that stall the ribosome. Acts as a ribosome quality control (RQC) cofactor by joining the RQC complex to facilitate peptidyl transfer during CAT tailing step. The polypeptide is Eukaryotic translation initiation factor 5A (ANB1) (Candida albicans (strain SC5314 / ATCC MYA-2876) (Yeast)).